The following is a 362-amino-acid chain: Histidine biosynthesis bifunctional protein HisB (362 aa).

Positions 1-173 (MQPTLFIDRD…TVTNCGKRPP (173 aa)) are histidinol-phosphatase. Asp8 functions as the Nucleophile in the catalytic mechanism. Mg(2+) contacts are provided by Asp8 and Asp10. The Proton donor role is filled by Asp10. Residues Cys91, His93, Cys99, and Cys101 each contribute to the Zn(2+) site. Mg(2+) is bound at residue Asp128. An imidazoleglycerol-phosphate dehydratase region spans residues 174-362 (RFAEVIRQTK…NEMPSSKGVL (189 aa)).

The protein in the N-terminal section; belongs to the histidinol-phosphatase family. In the C-terminal section; belongs to the imidazoleglycerol-phosphate dehydratase family. Mg(2+) serves as cofactor. Requires Zn(2+) as cofactor.

The protein localises to the cytoplasm. The catalysed reaction is D-erythro-1-(imidazol-4-yl)glycerol 3-phosphate = 3-(imidazol-4-yl)-2-oxopropyl phosphate + H2O. It carries out the reaction L-histidinol phosphate + H2O = L-histidinol + phosphate. It functions in the pathway amino-acid biosynthesis; L-histidine biosynthesis; L-histidine from 5-phospho-alpha-D-ribose 1-diphosphate: step 6/9. The protein operates within amino-acid biosynthesis; L-histidine biosynthesis; L-histidine from 5-phospho-alpha-D-ribose 1-diphosphate: step 8/9. This Haemophilus influenzae (strain 86-028NP) protein is Histidine biosynthesis bifunctional protein HisB.